Here is a 325-residue protein sequence, read N- to C-terminus: S-adenosylmethionine carrier 1, chloroplastic/mitochondrial (325 aa).

Residues 1 to 38 constitute a chloroplast and mitochondrion transit peptide; it reads MAPLTLSVDVKSSSATSHDVSKRVMQSSQLKINKGFFA. 3 Solcar repeats span residues 52–124, 133–215, and 228–310; these read RTLF…TKQK, LSAV…LCLG, and ENAL…TKRT. 5 helical membrane passes run 55–75, 97–117, 132–152, 230–250, and 285–305; these read FEGFIAGGTAGVVVETALYPI, YSGLAGNIAGVLPASALFVGV, HLSAVAHLTAGAIGGLAASLI, ALIGAFAGALTGAVTTPLDVI, and GIGPRVLWIGIGGSIFFGVLE.

The protein belongs to the mitochondrial carrier (TC 2.A.29) family. In terms of tissue distribution, expressed in seedlings, cotyledons, leaves and flowers. Lower levels of expression in stems and roots. Not detected in senescent leaves, petals and pollen grains.

The protein localises to the mitochondrion membrane. It localises to the plastid. It is found in the chloroplast membrane. With respect to regulation, inhibited strongly by tannic acid, bromocresol purple, mercuric chloride, mersalyl, p-hydroxymercuribenzoate, S-adenosylhomocysteine, S-adenosylcysteine and adenosylornithine, and to a lesser extent by N-ethylmaleimide, bathophenanthroline and pyridoxal-5'-P. Functionally, transporter involved in exchange reactions through membranes. Has a low uniporter activity. Specifically mediates the transport of S-adenosylmethionine (SAM) and its closest analogs. Probably involved in the uptake of SAM in exchange for S-adenosylhomocysteine (SAHC), which is produced from SAM in the mitochondrial matrix and plastidial stroma by methyltransferase activities. The polypeptide is S-adenosylmethionine carrier 1, chloroplastic/mitochondrial (SAMC1) (Arabidopsis thaliana (Mouse-ear cress)).